Consider the following 527-residue polypeptide: Rhamnogalacturonate lyase A (527 aa).

An N-terminal signal peptide occupies residues 1-19 (MLKASLLSFVAFTAQVAHA). Cystine bridges form between Cys49/Cys92 and Cys183/Cys192. Asn350 carries an N-linked (GlcNAc...) asparagine glycan.

It belongs to the polysaccharide lyase 4 family.

It localises to the secreted. The enzyme catalyses Endotype eliminative cleavage of L-alpha-rhamnopyranosyl-(1-&gt;4)-alpha-D-galactopyranosyluronic acid bonds of rhamnogalacturonan I domains in ramified hairy regions of pectin leaving L-rhamnopyranose at the reducing end and 4-deoxy-4,5-unsaturated D-galactopyranosyluronic acid at the non-reducing end.. Functionally, pectinolytic enzyme that has a positive effect in the apple hot-mash liquefaction process. This endolyase hydrolyzes the alpha-L-rhamnopyranosyl-(1,4)-alpha-D-galacturonopyranosyl glycosidic linkage by beta-elimination, thereby generating oligosaccharides terminating at the non-reducing end with a hex-4-enopyranosyluronic acid residue. The chain is Rhamnogalacturonate lyase A (rglA) from Aspergillus aculeatus.